Reading from the N-terminus, the 466-residue chain is tRNA(Ile)-lysidine synthase (466 aa).

An ATP-binding site is contributed by 26–31; it reads SGGSDS.

It belongs to the tRNA(Ile)-lysidine synthase family.

Its subcellular location is the cytoplasm. It carries out the reaction cytidine(34) in tRNA(Ile2) + L-lysine + ATP = lysidine(34) in tRNA(Ile2) + AMP + diphosphate + H(+). Functionally, ligates lysine onto the cytidine present at position 34 of the AUA codon-specific tRNA(Ile) that contains the anticodon CAU, in an ATP-dependent manner. Cytidine is converted to lysidine, thus changing the amino acid specificity of the tRNA from methionine to isoleucine. In Oceanobacillus iheyensis (strain DSM 14371 / CIP 107618 / JCM 11309 / KCTC 3954 / HTE831), this protein is tRNA(Ile)-lysidine synthase.